A 2376-amino-acid polypeptide reads, in one-letter code: Serine/threonine-protein kinase WNK1 (2376 aa).

Disordered regions lie at residues 1–78 (MSGG…EHRF) and 93–201 (ELPG…QQDD). 2 stretches are compositionally biased toward low complexity: residues 10–19 (SSPPGSLFLS) and 40–49 (GAAAADAGAG). A phosphoserine mark is found at S15 and S19. The segment covering 50-66 (RTEEYRRRRHTMDKDSR) has biased composition (basic and acidic residues). A Phosphothreonine modification is found at T60. Residues 125–158 (TPAVAHVAQQPPAAATPGEPAAAVPAAASAPGSA) are compositionally biased toward low complexity. Residue S172 is modified to Phosphoserine. The Protein kinase domain maps to 219–477 (LKFDIEIGRG…IKDLLNHAFF (259 aa)). An ATP-binding site is contributed by S229. Chloride is bound by residues F281 and L297. ATP contacts are provided by residues 299-302 (TELM) and K349. D366 functions as the Proton acceptor in the catalytic mechanism. Residues L367 and L369 each contribute to the chloride site. S376 and S380 each carry phosphoserine; by autocatalysis. The segment at 486–553 (ELAEEDDGEK…VCEGDHKTMA (68 aa)) is autoinhibitory domain. The span at 571–586 (QLVREEQEKRKQEESS) shows a compositional bias: basic and acidic residues. Disordered stretches follow at residues 571-641 (QLVR…QLQY), 701-799 (AQPH…PVPT), and 1026-1118 (TTSS…SRPK). 2 stretches are compositionally biased toward low complexity: residues 587–601 (LKQQGEQQSSASQAG) and 614–624 (AAATTSASVST). An interaction with KLHL3 region spans residues 627–637 (EPEEPEADQHQ). Over residues 708–752 (PPSSMAQGQSQGQPSSSSLTGIPSSQPVQHSQQQQGVQQTAPSQQ) the composition is skewed to low complexity. A compositionally biased stretch (polar residues) spans 753–766 (TVQYSLPQTSAPSE). Over residues 1045 to 1057 (PPEPVPAAPPQPT) the composition is skewed to pro residues. Residues 1079–1089 (SDGNENVPSSS) are compositionally biased toward polar residues. A compositionally biased stretch (basic residues) spans 1097 to 1118 (IKRHYRKSVRSRSRHEKTSRPK). Positions 1257-1260 (RFIV) match the RFXV motif 1 motif. S1261 bears the Phosphoserine mark. 2 disordered regions span residues 1459–1478 (STAAPGAKPPPVSSQQVSGS) and 1734–1770 (STIPAVKPGTAPSKPPSTKPPVLPLGTELPAGTPPSE). Over residues 1746 to 1756 (SKPPSTKPPVL) the composition is skewed to pro residues. An RFXV motif 2 motif is present at residues 1853 to 1856 (RFQV). Residues 1862–1878 (DTQKEGKNKSEDVKSVH) are compositionally biased toward basic and acidic residues. The interval 1862–1942 (DTQKEGKNKS…QPTKVGRFQV (81 aa)) is disordered. The segment covering 1881-1899 (SSTSESSVLSSSSPESTLV) has biased composition (low complexity). 2 consecutive short sequence motifs (RFXV motif) follow at residues 1939–1942 (RFQV) and 1951–1954 (RFSV). Residues S1972, S1996, S2005, S2006, S2021, S2023, and S2026 each carry the phosphoserine modification. Disordered stretches follow at residues 1991-2033 (EKPE…LCSK) and 2110-2239 (AAAP…RKGT). Residues 2116–2128 (GRRRRPTKSKGSK) are compositionally biased toward basic residues. The segment covering 2129–2141 (SSRSSSLGNKSPG) has biased composition (low complexity). Polar residues-rich tracts occupy residues 2146–2161 (LSGQSTATVLHPQQTL) and 2169–2193 (ETGQNQLLQPLKPSPSSDNLYSAFT). A compositionally biased stretch (low complexity) spans 2207-2223 (GQGTSSTNTVGGTVSSQ). Residues 2224-2238 (AAQAQPPTMTSSRKG) show a composition bias toward polar residues. The amphipathic alpha-helix stretch occupies residues 2235–2255 (SRKGTFTDDLHKLVDNWARDA). Phosphoserine is present on residues S2264, S2280, S2364, and S2366.

The protein belongs to the protein kinase superfamily. Ser/Thr protein kinase family. WNK subfamily. In terms of assembly, interacts with WNK3. Interacts with WNK4; inhibiting the activity of WNK4. Interacts with SGK1; promoting its activation. Associates with the mTORC2 complex. Interacts with UVRAG. Interacts (via amphipathic alpha-helix region) with EMC2; promoting the ER membrane protein complex assembly. Mg(2+) serves as cofactor. In terms of processing, autophosphorylated at Ser-376 and Ser-380, promoting its activity. Autophosphorylation at Ser-380 is inhibited by intracellular calcium. Phosphorylation at Thr-60 increases ability to activate SGK1. Ubiquitinated by the BCR(KLHL3) complex, leading to its degradation. Also ubiquitinated by the BCR(KLHL2) complex.

It localises to the cytoplasm. The protein resides in the nucleus. It is found in the cytoskeleton. The protein localises to the spindle. The catalysed reaction is L-seryl-[protein] + ATP = O-phospho-L-seryl-[protein] + ADP + H(+). It catalyses the reaction L-threonyl-[protein] + ATP = O-phospho-L-threonyl-[protein] + ADP + H(+). Its activity is regulated as follows. Activated in response to hyperosmotic stress: cell shrinkage promotes formation of a membraneless compartment that concentrates WNK1 with its substrates, OXSR1/OSR1 and STK39/SPAK. Activation requires autophosphorylation of Ser-380 and, to a lower extent, Ser-376. Autophosphorylation and subsequent activation is inhibited by increases in intracellular ionic strength: Cl(-) potently inhibits WNK1 kinase activity via direct binding. Also inhibited by K(+) ions. In terms of biological role, serine/threonine-protein kinase component of the WNK1-SPAK/OSR1 kinase cascade, which acts as a key regulator of blood pressure and regulatory volume increase by promoting ion influx. WNK1 mediates regulatory volume increase in response to hyperosmotic stress by acting as a molecular crowding sensor, which senses cell shrinkage and mediates formation of a membraneless compartment by undergoing liquid-liquid phase separation. The membraneless compartment concentrates WNK1 with its substrates, OXSR1/OSR1 and STK39/SPAK, promoting WNK1-dependent phosphorylation and activation of downstream kinases OXSR1/OSR1 and STK39/SPAK. Following activation, OXSR1/OSR1 and STK39/SPAK catalyze phosphorylation of ion cotransporters SLC12A1/NKCC2, SLC12A2/NKCC1, SLC12A5/KCC2 and SLC12A6/KCC3, regulating their activity. Phosphorylation of Na-K-Cl cotransporters SLC12A2/NKCC1 and SLC12A2/NKCC1 promote their activation and ion influx; simultaneously, phosphorylation of K-Cl cotransporters SLC12A5/KCC2 and SLC12A6/KCC3 inhibit their activity, blocking ion efflux. Also acts as a regulator of angiogenesis in endothelial cells via activation of OXSR1/OSR1 and STK39/SPAK: activation of OXSR1/OSR1 regulates chemotaxis and invasion, while STK39/SPAK regulates endothelial cell proliferation. Also acts independently of the WNK1-SPAK/OSR1 kinase cascade by catalyzing phosphorylation of other substrates, such as SYT2, PCF11 and NEDD4L. Mediates phosphorylation of SYT2, regulating SYT2 association with phospholipids and membrane-binding. Regulates mRNA export in the nucleus by mediating phosphorylation of PCF11, thereby decreasing the association between PCF11 and POLR2A/RNA polymerase II and promoting mRNA export to the cytoplasm. Acts as a negative regulator of autophagy. Required for the abscission step during mitosis, independently of the WNK1-SPAK/OSR1 kinase cascade. May also play a role in actin cytoskeletal reorganization. Also acts as a scaffold protein independently of its protein kinase activity: negatively regulates cell membrane localization of various transporters and channels, such as SLC4A4, SLC26A6, SLC26A9, TRPV4 and CFTR. Involved in the regulation of epithelial Na(+) channel (ENaC) by promoting activation of SGK1 in a kinase-independent manner: probably acts as a scaffold protein that promotes the recruitment of SGK1 to the mTORC2 complex in response to chloride, leading to mTORC2-dependent phosphorylation and activation of SGK1. Acts as an assembly factor for the ER membrane protein complex independently of its protein kinase activity: associates with EMC2 in the cytoplasm via its amphipathic alpha-helix, and prevents EMC2 ubiquitination and subsequent degradation, thereby promoting EMC2 stabilization. This Sus scrofa (Pig) protein is Serine/threonine-protein kinase WNK1.